A 369-amino-acid chain; its full sequence is Glutamate 5-kinase (369 aa).

Lysine 9 serves as a coordination point for ATP. Residues serine 49, aspartate 136, and asparagine 148 each contribute to the substrate site. ATP is bound by residues 168–169 and 210–216; these read TD and TGGMLTK. The region spanning 275 to 355 is the PUA domain; it reads QGEIYVDQGA…KGVVIHRDDW (81 aa).

Belongs to the glutamate 5-kinase family.

It is found in the cytoplasm. The enzyme catalyses L-glutamate + ATP = L-glutamyl 5-phosphate + ADP. It participates in amino-acid biosynthesis; L-proline biosynthesis; L-glutamate 5-semialdehyde from L-glutamate: step 1/2. Its function is as follows. Catalyzes the transfer of a phosphate group to glutamate to form L-glutamate 5-phosphate. The polypeptide is Glutamate 5-kinase (Streptococcus gordonii (strain Challis / ATCC 35105 / BCRC 15272 / CH1 / DL1 / V288)).